We begin with the raw amino-acid sequence, 2669 residues long: MSGRGSRKRGRPPKTPNERASGRFNYQLLKKPKYLSEGKSQPSTPSASRGISPQSDEGSRSSHNNHTNRSRGSAAKRGRGRKSAVQPNTSSYSGRKGYESEYHYGSDFGDSEEDKSDNEDDMLLTPSDDESLEVANESESEFSVCSFNQNGVGRPPRPPSPEPVWLQEGRQYAALDLPDSSEDLFIANTHVLRALSIYEVLRRFRHMVRLSPFRFEDLCAALACEEQSALLTEVHIMLLKAILREEDAQGTHFGPLDQKDTVNISLYLIDSITWPEVLRSYVESDKTFDRNVFHILSHTEYPYTGIDNRLEVLQFLSDQFLTSNSIRDVMLQEGPIHYDDHCRVCHRLGDLLCCETCPAVYHLECVDPPMNDVPTEDWQCGLCRSHKVSGVVDCVLPQEKQGVLIRHDSLGVDRHGRKYWFIARRIFIEDQENFTCWYYSTTSKLKLLLSRLDAEELETRLHSQITERRDEIERQMKLTETLTNEHKHTKRSVIEIEQEAKNELLEKEVLDEDEKDGDAKSESQSIEGTKKQEECKMVTRQKSNQLTNGTLHFKLGMEQGFKNYVNQYSTNPIALNKPQRNEERDKRRHLSHKFSLTTASDFKWIGITMGTTDNMITTLRQTLINFESNIAASFLNINWVVNKKIWNAAVMNARRPSEFAVVLLLFQASLKSVVFANVWHEQLGHTTLQRITSAEREERKKLEKREKRERDDEEERNRLAFNYIKYTLGLKHQVWKQKGEEYRVHGQWGWLWLSSSRRCGVRARRAQPLTHNRVYVHYTMGEENDVNEIILVDPRTQRFMQQCESSNVDGQVCHYLPDQYKNVKVIEDVTEKIKGHIDVSKALNAPGRTYYSKVARKSRLDDLLDRRLKLAEVEEQMASKIPSDMKPLLVSSQNNTANSKQTFLEKRLLRLTEVQAKGGPANVNLELVNSLAKQIQTVRLQFSQLNRFAKVFRCYTKECNTNSNAVSQITQNTCYSPLCLQKARAKKELLLLLRKAHTAGNGSKETVAAILGAVKKPSILEQKLTEGKRESTQVAVDDSEEGKPAESEAPLDLLQDWEHARAHAVPFSDSLLTECILVDQECVTNTKIKQEVNASSGCNTTPDSNTQDSDKIDYIESMDVCSNVEIESTEDSIVTGLNSGNAEDVDMTPGWRRKRNQKSKKSYIGTKDVLDQTLDKDIPLNKQNRRFPITARPVKRECVKKYERETFENGNERVYSTSSPRGRVYLLNDAAKLYEQAVKTEDKSTITKKPSYSRYPLISNFLTHKKKRSLLVLPRFELLKLARLGGKSSTNGFHHAAKNNTIWQYQCSRPLFRTCWSYRTSNATSLSSLALQLRILWSCLRWDDMIAKPPSTDGKHQVTTDTEIVTLELLKLRHSGRYGEKTSYLRRKVVIPLEMPKTVREVTSIRSGLRKRKRAESPQPTEPQITEEWVDEDKLELWEIKFMGEKQEKARLSAVTRSVASRQLEASGSNGSNTSTNGALGVAGRVQLAPKLSEDVKEKMEQQLKLQRAVHQQRKLVATGEITRSVTPVKGQVIGSRRVIVKNPDGTTRIIQQAVTQVSRTGGANTAAAAASPTVGGSTSTQSNPSTSTPHKVQIIRGPDGKVSVRGLNPGQQLVQMPDGKLHVLTTTTSSNSAGQGNKMKVPIKPASTSSSPAISSAQTTTNPVTPVIKQIAVKHVTKNSATQSIASSSRVALPLAQIKNKLLLAQQQQQSTSSSPATSSSPVQKIVSKVVNTSTSGQTLQQVFVQSGSKLVVGQNAQGQKVIISTSAAQQQGTSPVQQQQLVQSQPIQQSPQQISMTQVGNQPTQKVIQQIVNTSNVQQQIVVGGQRIILSPGQTIVTQRNVPQSQALQMVQQQIQTQQQQQQHHVVQPQQQFVVQSNQIVQSSPSAQTKLVKQLVVQQQSQQTIEEKTQITTTDSNETGTQQVLVPNSTLAQQLAQGKLQVATVNGQQVIVKPLGNNQAQIVAHIKHQGDGNAHIVTSNSATAVPQANPQTSPVKQQALPPQSPQQVVVQQQQIHQQSPTNFESGVTPITQQPVLTQAVQAPAQQQALSVEESLLQNQPPGTVIKCVTAQVLQTEHGPRIVLQGLVGNDFTAQQLQLVQTQVKQQLMKAQESNGKLGVLGPTKIYLAVQPENAVQSQPPPLTPVHQSAAHQQTNNIEIDADTLATTYEANSTIKDIAINNGDDQENSKCAETENSNITTNESFAGTSSLLEGSEHDEPTNLAGLDISETDLENKQNESFVVTRGYIQKSISNALKQGNLSPELEEKLVCMQKQQENANSTNEWETCSRGSVNEEALTPSRQTDDTEWKIRTSLRRPNAMTTSSQFNRILKKNRSKNDEVAELGEQKQSQLERHKELLKKNILRKRSLLERNLQSEIHEDVKTKVQRHVRPLSNASPDEQSENERSGEPNLDFKRTEVQNPRHGAGRPKKLTRKKEKLYCICRTPYDDTKFYVGCDLCSNWFHGDCVSITEEASKKLSEFICIDCKRARETQQLYCSCRQPYDESQFYICCDKCQDWFHGRCVGILQSEAEFIDEYVCPECQRKNDANAANMKKLTSNDVEELKNLIKQMQLHKSAWPFMEPVDPKEAPDYYKVIKEPMDLKRMEIKLESNTYTKLSEFIGDMTKIFDNCRYYNPKESSFYKCAEALESYFVQKIKNFRENVFDQRT.

Basic residues predominate over residues 1-12; the sequence is MSGRGSRKRGRP. Residues 1–121 are required for function in nucleosome sliding; that stretch reads MSGRGSRKRG…EEDKSDNEDD (121 aa). The disordered stretch occupies residues 1–125; that stretch reads MSGRGSRKRG…SDNEDDMLLT (125 aa). Residues 6 to 18 constitute a DNA-binding region (a.T hook); the sequence is SRKRGRPPKTPNE. A compositionally biased stretch (polar residues) spans 38 to 56; the sequence is GKSQPSTPSASRGISPQSD. Phosphoserine is present on residues Ser-40, Ser-52, Ser-55, Ser-59, and Ser-62. The segment covering 66 to 82 has biased composition (basic residues); sequence HTNRSRGSAAKRGRGRK. The segment covering 109–125 has biased composition (acidic residues); that stretch reads GDSEEDKSDNEDDMLLT. One can recognise a DDT domain in the interval 188-248; sequence NTHVLRALSI…LKAILREEDA (61 aa). The PHD-type 1 zinc-finger motif lies at 339-386; it reads DDHCRVCHRLGDLLCCETCPAVYHLECVDPPMNDVPTEDWQCGLCRSH. Positions 460–515 form a coiled coil; sequence RLHSQITERRDEIERQMKLTETLTNEHKHTKRSVIEIEQEAKNELLEKEVLDEDEK. The interval 505-538 is disordered; that stretch reads LEKEVLDEDEKDGDAKSESQSIEGTKKQEECKMV. Positions 528 to 537 are enriched in basic and acidic residues; sequence GTKKQEECKM. The stretch at 688 to 720 forms a coiled coil; that stretch reads LQRITSAEREERKKLEKREKRERDDEEERNRLA. Disordered stretches follow at residues 1026 to 1048, 1135 to 1159, and 1406 to 1425; these read EGKRESTQVAVDDSEEGKPAESE, TGLNSGNAEDVDMTPGWRRKRNQKS, and RSGLRKRKRAESPQPTEPQI. Position 1417 is a phosphoserine (Ser-1417). A Phosphothreonine modification is found at Thr-1527. Over residues 1559–1590 the composition is skewed to low complexity; that stretch reads SRTGGANTAAAAASPTVGGSTSTQSNPSTSTP. 3 disordered regions span residues 1559–1596, 2181–2203, and 2283–2307; these read SRTGGANTAAAAASPTVGGSTSTQSNPSTSTPHKVQII, INNGDDQENSKCAETENSNITTN, and TNEWETCSRGSVNEEALTPSRQTDD. Residues 2283–2293 show a composition bias toward polar residues; sequence TNEWETCSRGS. Residues 2338–2373 adopt a coiled-coil conformation; sequence KNDEVAELGEQKQSQLERHKELLKKNILRKRSLLER. Residues 2382–2432 are disordered; sequence DVKTKVQRHVRPLSNASPDEQSENERSGEPNLDFKRTEVQNPRHGAGRPKK. Ser-2395, Ser-2398, and Ser-2403 each carry phosphoserine. The span at 2404-2419 shows a compositional bias: basic and acidic residues; it reads ENERSGEPNLDFKRTE. Residues 2481–2546 form a PHD-type 2 zinc finger; sequence EFICIDCKRA…EYVCPECQRK (66 aa). The Bromo domain maps to 2556–2660; that stretch reads KLTSNDVEEL…SYFVQKIKNF (105 aa).

It belongs to the BPTF family. As to quaternary structure, component of the NURF complex composed of Caf1-55, E(bx), Nurf-38 and Iswi. Interacts with Trl. Interacts with histone H3-K4Me3.

The protein resides in the nucleus. Its function is as follows. Histone-binding component of NURF (nucleosome remodeling factor), a complex which catalyzes ATP-dependent nucleosome sliding and facilitates transcription of chromatin. Specifically recognizes H3 tails trimethylated on 'Lys-4' (H3K4me3), which mark transcription start sites of virtually all active genes. Required for homeotic gene expression, proper larval blood cell development, normal male X chromosome morphology, ecdysteroid signaling and metamorphosis. The protein is Nucleosome-remodeling factor subunit NURF301 (E(bx)) of Drosophila melanogaster (Fruit fly).